The chain runs to 97 residues: Small ribosomal subunit protein bS16c (97 aa).

Belongs to the bacterial ribosomal protein bS16 family.

The protein localises to the plastid. It localises to the chloroplast. This Piper cenocladum (Ant piper) protein is Small ribosomal subunit protein bS16c.